We begin with the raw amino-acid sequence, 170 residues long: Transcription factor E (170 aa).

The HTH TFE/IIEalpha-type domain maps to 1–93 (MKDAYLYVVE…AWYVDDEIIR (93 aa)).

Belongs to the TFE family. As to quaternary structure, monomer. Interaction with RNA polymerase subunits RpoF and RpoE is necessary for Tfe stimulatory transcription activity. Able to interact with Tbp and RNA polymerase in the absence of DNA promoter. Interacts both with the preinitiation and elongation complexes.

In terms of biological role, transcription factor that plays a role in the activation of archaeal genes transcribed by RNA polymerase. Facilitates transcription initiation by enhancing TATA-box recognition by TATA-box-binding protein (Tbp), and transcription factor B (Tfb) and RNA polymerase recruitment. Not absolutely required for transcription in vitro, but particularly important in cases where Tbp or Tfb function is not optimal. It dynamically alters the nucleic acid-binding properties of RNA polymerases by stabilizing the initiation complex and destabilizing elongation complexes. Seems to translocate with the RNA polymerase following initiation and acts by binding to the non template strand of the transcription bubble in elongation complexes. The protein is Transcription factor E of Pyrobaculum arsenaticum (strain DSM 13514 / JCM 11321 / PZ6).